A 136-amino-acid chain; its full sequence is 6,7-dimethyl-8-ribityllumazine synthase (136 aa).

Residues Phe-11, 43 to 45 (SFD), and 67 to 69 (AVI) contribute to the 5-amino-6-(D-ribitylamino)uracil site. A (2S)-2-hydroxy-3-oxobutyl phosphate-binding site is contributed by 72–73 (ET). His-75 (proton donor) is an active-site residue. Residue Leu-100 participates in 5-amino-6-(D-ribitylamino)uracil binding. Residue Arg-115 participates in (2S)-2-hydroxy-3-oxobutyl phosphate binding.

This sequence belongs to the DMRL synthase family.

The catalysed reaction is (2S)-2-hydroxy-3-oxobutyl phosphate + 5-amino-6-(D-ribitylamino)uracil = 6,7-dimethyl-8-(1-D-ribityl)lumazine + phosphate + 2 H2O + H(+). It participates in cofactor biosynthesis; riboflavin biosynthesis; riboflavin from 2-hydroxy-3-oxobutyl phosphate and 5-amino-6-(D-ribitylamino)uracil: step 1/2. Its function is as follows. Catalyzes the formation of 6,7-dimethyl-8-ribityllumazine by condensation of 5-amino-6-(D-ribitylamino)uracil with 3,4-dihydroxy-2-butanone 4-phosphate. This is the penultimate step in the biosynthesis of riboflavin. This Picrophilus torridus (strain ATCC 700027 / DSM 9790 / JCM 10055 / NBRC 100828 / KAW 2/3) protein is 6,7-dimethyl-8-ribityllumazine synthase.